A 492-amino-acid chain; its full sequence is Glutamyl-tRNA(Gln) amidotransferase subunit A (492 aa).

Active-site charge relay system residues include lysine 84 and serine 159. Serine 183 functions as the Acyl-ester intermediate in the catalytic mechanism.

Belongs to the amidase family. GatA subfamily. Heterotrimer of A, B and C subunits.

The enzyme catalyses L-glutamyl-tRNA(Gln) + L-glutamine + ATP + H2O = L-glutaminyl-tRNA(Gln) + L-glutamate + ADP + phosphate + H(+). Allows the formation of correctly charged Gln-tRNA(Gln) through the transamidation of misacylated Glu-tRNA(Gln) in organisms which lack glutaminyl-tRNA synthetase. The reaction takes place in the presence of glutamine and ATP through an activated gamma-phospho-Glu-tRNA(Gln). The polypeptide is Glutamyl-tRNA(Gln) amidotransferase subunit A (Anaeromyxobacter dehalogenans (strain 2CP-C)).